A 175-amino-acid polypeptide reads, in one-letter code: Large ribosomal subunit protein uL10 (175 aa).

It belongs to the universal ribosomal protein uL10 family. As to quaternary structure, part of the ribosomal stalk of the 50S ribosomal subunit. The N-terminus interacts with L11 and the large rRNA to form the base of the stalk. The C-terminus forms an elongated spine to which L12 dimers bind in a sequential fashion forming a multimeric L10(L12)X complex.

Functionally, forms part of the ribosomal stalk, playing a central role in the interaction of the ribosome with GTP-bound translation factors. The polypeptide is Large ribosomal subunit protein uL10 (Prochlorococcus marinus (strain MIT 9301)).